We begin with the raw amino-acid sequence, 274 residues long: Nitrogenase iron protein (274 aa).

Position 8–15 (8–15 (GKGGIGKS)) interacts with ATP. [4Fe-4S] cluster is bound at residue Cys-94. ADP-ribosylarginine; by dinitrogenase reductase ADP-ribosyltransferase is present on Arg-97. Cys-131 contacts [4Fe-4S] cluster.

Belongs to the NifH/BchL/ChlL family. Homodimer. [4Fe-4S] cluster is required as a cofactor. In terms of processing, the reversible ADP-ribosylation of Arg-97 inactivates the nitrogenase reductase and regulates nitrogenase activity.

The enzyme catalyses N2 + 8 reduced [2Fe-2S]-[ferredoxin] + 16 ATP + 16 H2O = H2 + 8 oxidized [2Fe-2S]-[ferredoxin] + 2 NH4(+) + 16 ADP + 16 phosphate + 6 H(+). Functionally, the key enzymatic reactions in nitrogen fixation are catalyzed by the nitrogenase complex, which has 2 components: the iron protein and the molybdenum-iron protein. This is Nitrogenase iron protein from Chlorobium limicola (strain DSM 245 / NBRC 103803 / 6330).